We begin with the raw amino-acid sequence, 315 residues long: Methionyl-tRNA formyltransferase (315 aa).

(6S)-5,6,7,8-tetrahydrofolate is bound at residue 113-116; that stretch reads SLLP.

This sequence belongs to the Fmt family.

It carries out the reaction L-methionyl-tRNA(fMet) + (6R)-10-formyltetrahydrofolate = N-formyl-L-methionyl-tRNA(fMet) + (6S)-5,6,7,8-tetrahydrofolate + H(+). In terms of biological role, attaches a formyl group to the free amino group of methionyl-tRNA(fMet). The formyl group appears to play a dual role in the initiator identity of N-formylmethionyl-tRNA by promoting its recognition by IF2 and preventing the misappropriation of this tRNA by the elongation apparatus. This Pseudoalteromonas atlantica (strain T6c / ATCC BAA-1087) protein is Methionyl-tRNA formyltransferase.